Here is a 1099-residue protein sequence, read N- to C-terminus: Contactin-5 (1099 aa).

The first 18 residues, 1 to 18 (MASSWRLILFLSFTSCLS), serve as a signal peptide directing secretion. 6 consecutive Ig-like C2-type domains span residues 99-190 (PVFV…ATLQ), 196-282 (NFSG…RVLS), 300-385 (PKIE…GQLQ), 390-474 (PHWV…AELK), 480-569 (PSFE…VSVK), and 571-660 (PTRI…DSVS). A disulfide bridge connects residues C123 and C173. N-linked (GlcNAc...) asparagine glycosylation is found at N138 and N196. Intrachain disulfides connect C217-C269 and C322-C369. 3 N-linked (GlcNAc...) asparagine glycosylation sites follow: N397, N449, and N540. 3 cysteine pairs are disulfide-bonded: C411–C458, C503–C551, and C593–C650. 4 consecutive Fibronectin type-III domains span residues 673–771 (PPGV…TNEA), 776–873 (APSN…SAEG), 878–972 (APTD…TKRH), and 977–1067 (PPGN…SYAG). N779, N816, and N931 each carry an N-linked (GlcNAc...) asparagine glycan. Residues 958-983 (YGPPSREVSATTKRHPPSEPPGNLRW) form a disordered region. A glycan (N-linked (GlcNAc...) asparagine) is linked at N1002. S1072 is lipidated: GPI-anchor amidated serine. Residues 1073-1099 (AQSTLHSLSKWSSVTLLLALMLPSSSW) constitute a propeptide, removed in mature form.

It belongs to the immunoglobulin superfamily. Contactin family. In terms of assembly, interacts with PTPRG. As to expression, specifically expressed in the nervous system. Expressed in cerebrum and cerebellum but at low level in spinal cord. In brain, it is expressed in highly restricted regions at postnatal day 7, such as the auditory pathway, including the cochlear nucleus, superior olive, inferior colliculus, medial geniculate nucleus and auditory cortex. Expressed in the accessory olfactory bulb, glomerular and mitral cell layers in the olfactory bulb, anterior thalamic nuclei, layers II-IV of the cerebral cortex, dentate gyrus of the hippocampus and external granule cells and Purkinje cells of the cerebellum. Also expressed in the piriform cortex, inferior olive and facial nucleus. Weakly or not expressed in other parts of the brain.

The protein localises to the cell membrane. In terms of biological role, contactins mediate cell surface interactions during nervous system development. Has some neurite outgrowth-promoting activity in the cerebral cortical neurons but not in hippocampal neurons. Probably involved in neuronal activity in the auditory system. The protein is Contactin-5 (Cntn5) of Rattus norvegicus (Rat).